The chain runs to 286 residues: Protein MGF 360-3L (286 aa).

A helical transmembrane segment spans residues 1-17 (MKVLLELLLGYSVLILA). An N-linked (GlcNAc...) asparagine; by host glycan is attached at asparagine 61. 2 consecutive transmembrane segments (helical) span residues 128 to 148 (HCCF…FVYN) and 153 to 173 (LNTT…SQPA). Asparagine 238 and asparagine 263 each carry an N-linked (GlcNAc...) asparagine; by host glycan.

Belongs to the asfivirus MGF 110 family.

The protein localises to the host membrane. In terms of biological role, plays a role in virus cell tropism, and may be required for efficient virus replication in macrophages. The chain is Protein MGF 360-3L from African swine fever virus (isolate Tick/Malawi/Lil 20-1/1983) (ASFV).